The sequence spans 582 residues: MGQAAAITMPIDPRNLNTLWSSVLAESFVRLGLQTVVICPGSRSAPLAIAFAEHPEIDAIPILDERSAGFFALGRAKASHRPVALICSSGTAGANFYPAVIEAKESGVPLLVITADRPPELRQCHAGQAIDQLRLFGSYALWEAELALPVLDLGLLRYLRQTAQQAWQQALRGGPVHLNQPLREPLAPIADPATQTWLAQQWPGENFFAELLTAVPTPQIQQPLPPLPSQGLITVGPIAPEDPAAFVQAIAQLSAHLGWPVLSDAVTPLRQFADHCPRLISSYDLILRQPHWRASLQPEAVLQIGELPTSKELRLWLTEQTCPRWIVSPRPENFDPLHGSSHHLPVTVEAIAIPATIAPASDYSRQWQQAETAVQAAIAQHLAQVPDLTEPGIARLLSQHLPAQTPIFVANSTPIRDLEWFWLANDQRRSLYCSRGANGIDGTLSTAIGIAHQNRPSVLITGDLSLLHDSNGFLQRSQLQGHLTVVLIDNSGGGIFELLPIRDCGPSFEPFVATPQTVDFAALCQAYGVDYQAIATEAELIKAIQTLPTSGIRVLHLFTDRRQNAAWRRALFAELAAIPSQS.

It belongs to the TPP enzyme family. MenD subfamily. Homodimer. Requires Mg(2+) as cofactor. It depends on Mn(2+) as a cofactor. Thiamine diphosphate serves as cofactor.

The enzyme catalyses isochorismate + 2-oxoglutarate + H(+) = 5-enolpyruvoyl-6-hydroxy-2-succinyl-cyclohex-3-ene-1-carboxylate + CO2. It functions in the pathway quinol/quinone metabolism; 1,4-dihydroxy-2-naphthoate biosynthesis; 1,4-dihydroxy-2-naphthoate from chorismate: step 2/7. It participates in cofactor biosynthesis; phylloquinone biosynthesis. Its function is as follows. Catalyzes the thiamine diphosphate-dependent decarboxylation of 2-oxoglutarate and the subsequent addition of the resulting succinic semialdehyde-thiamine pyrophosphate anion to isochorismate to yield 2-succinyl-5-enolpyruvyl-6-hydroxy-3-cyclohexene-1-carboxylate (SEPHCHC). The protein is 2-succinyl-5-enolpyruvyl-6-hydroxy-3-cyclohexene-1-carboxylate synthase of Synechococcus elongatus (strain ATCC 33912 / PCC 7942 / FACHB-805) (Anacystis nidulans R2).